A 341-amino-acid chain; its full sequence is MKLRSECLPKSEHGTVLYTLSQLPDFPPCKDQDYSHEDLLQTAETFLKSRIKEGDVQANFLLGQLFFEEGWYEDALLQFEKVKDEDNQALYQAGVMYYDGLGTQEDHRKGVKYMERIVTSDCPSAKHLKYAAAYNLGRAYFEGYGIPHSDKEAERWWLFAADNGNPKASLKAQSVLGMYYSSPPNVDLQKAFLWHSEACGNGSLESQGALGVMYLYGNGIKKNVQAAIECLKEAAERGNVYAQGHLVSCYYQRKLYTKAVELAKKIVSHDNIELLVNTTDCLPSYTVKGVAIATFYFARCLHLGLGIKQDSTAAKQLYSKAAQLDAQVAAELNFDIIYGKI.

One copy of the TPR repeat lies at 56 to 89; it reads VQANFLLGQLFFEEGWYEDALLQFEKVKDEDNQA. 6 Sel1-like repeats span residues 90-122, 130-165, 170-203, 204-239, 240-271, and 291-326; these read LYQAGVMYYDGLGTQEDHRKGVKYMERIVTSDC, YAAAYNLGRAYFEGYGIPHSDKEAERWWLFAADNGN, LKAQSVLGMYYSSPPNVDLQKAFLWHSEACGNGS, LESQGALGVMYLYGNGIKKNVQAAIECLKEAAERGN, VYAQGHLVSCYYQRKLYTKAVELAKKIVSHDN, and AIATFYFARCLHLGLGIKQDSTAAKQLYSKAAQLDA.

The protein localises to the cytoplasm. Its function is as follows. May act as an adapter that regulates LRP2 function. The polypeptide is LRP2-binding protein (lrp2bp) (Xenopus laevis (African clawed frog)).